The following is a 161-amino-acid chain: 2-C-methyl-D-erythritol 2,4-cyclodiphosphate synthase (161 aa).

The a divalent metal cation site is built by D8 and H10. 4-CDP-2-C-methyl-D-erythritol 2-phosphate is bound by residues 8-10 (DLH) and 34-35 (HS). H42 is an a divalent metal cation binding site. 4-CDP-2-C-methyl-D-erythritol 2-phosphate contacts are provided by residues 56–58 (DIG) and R142.

It belongs to the IspF family. Homotrimer. A divalent metal cation is required as a cofactor.

It carries out the reaction 4-CDP-2-C-methyl-D-erythritol 2-phosphate = 2-C-methyl-D-erythritol 2,4-cyclic diphosphate + CMP. It participates in isoprenoid biosynthesis; isopentenyl diphosphate biosynthesis via DXP pathway; isopentenyl diphosphate from 1-deoxy-D-xylulose 5-phosphate: step 4/6. Its function is as follows. Involved in the biosynthesis of isopentenyl diphosphate (IPP) and dimethylallyl diphosphate (DMAPP), two major building blocks of isoprenoid compounds. Catalyzes the conversion of 4-diphosphocytidyl-2-C-methyl-D-erythritol 2-phosphate (CDP-ME2P) to 2-C-methyl-D-erythritol 2,4-cyclodiphosphate (ME-CPP) with a corresponding release of cytidine 5-monophosphate (CMP). The sequence is that of 2-C-methyl-D-erythritol 2,4-cyclodiphosphate synthase from Treponema denticola (strain ATCC 35405 / DSM 14222 / CIP 103919 / JCM 8153 / KCTC 15104).